The chain runs to 1436 residues: MAP kinase kinase kinase win1 (1436 aa).

Residues 56–85 are disordered; the sequence is LELPNNGKEENHRRPSVARSSSDRSKASAK. The segment covering 76-85 has biased composition (basic and acidic residues); sequence SSDRSKASAK. The residue at position 224 (Ser-224) is a Phosphoserine. Thr-226 bears the Phosphothreonine mark. Residues 282-1123 form an interaction with tea4 region; sequence EDSDLDSETS…SNITIRWQQG (842 aa). A Protein kinase domain is found at 1120–1406; the sequence is WQQGGLIGSG…AAELLMDPWV (287 aa). Residues 1126-1134 and Lys-1149 each bind ATP; that span reads IGSGSFGTV. Residue Asp-1244 is the Proton acceptor of the active site.

It belongs to the protein kinase superfamily. STE Ser/Thr protein kinase family. MAP kinase kinase kinase subfamily. As to quaternary structure, interacts with tea4.

The enzyme catalyses L-seryl-[protein] + ATP = O-phospho-L-seryl-[protein] + ADP + H(+). It carries out the reaction L-threonyl-[protein] + ATP = O-phospho-L-threonyl-[protein] + ADP + H(+). In terms of biological role, involved in a signal transduction pathway that is activated by changes in the osmolarity of the extracellular environment. Activates the wis1 MAP kinase kinase by phosphorylation. This is MAP kinase kinase kinase win1 (win1) from Schizosaccharomyces pombe (strain 972 / ATCC 24843) (Fission yeast).